The primary structure comprises 234 residues: Adenosine 5'-phosphosulfate reductase (234 aa).

Residues Cys-120, Cys-121, Cys-203, and Cys-206 each contribute to the [4Fe-4S] cluster site. The active-site Nucleophile; cysteine thiosulfonate intermediate is the Cys-229.

The protein belongs to the PAPS reductase family. CysH subfamily. [4Fe-4S] cluster is required as a cofactor.

It localises to the cytoplasm. The enzyme catalyses [thioredoxin]-disulfide + sulfite + AMP + 2 H(+) = adenosine 5'-phosphosulfate + [thioredoxin]-dithiol. It participates in sulfur metabolism; hydrogen sulfide biosynthesis; sulfite from sulfate. Functionally, catalyzes the formation of sulfite from adenosine 5'-phosphosulfate (APS) using thioredoxin as an electron donor. The polypeptide is Adenosine 5'-phosphosulfate reductase (Bacillus mycoides (strain KBAB4) (Bacillus weihenstephanensis)).